Consider the following 241-residue polypeptide: Large ribosomal subunit protein uL30 (241 aa).

The interval 1–32 is disordered; it reads MATTLKPETLQKKEKAQQKTAEERAAAKKVRK. Over residues 9-26 the composition is skewed to basic and acidic residues; it reads TLQKKEKAQQKTAEERAA.

This sequence belongs to the universal ribosomal protein uL30 family. As to quaternary structure, component of the large ribosomal subunit. Mature ribosomes consist of a small (40S) and a large (60S) subunit. The 40S subunit contains about 32 different proteins and 1 molecule of RNA (18S). The 60S subunit contains 45 different proteins and 3 molecules of RNA (25S, 5.8S and 5S).

It is found in the cytoplasm. Component of the ribosome, a large ribonucleoprotein complex responsible for the synthesis of proteins in the cell. The small ribosomal subunit (SSU) binds messenger RNAs (mRNAs) and translates the encoded message by selecting cognate aminoacyl-transfer RNA (tRNA) molecules. The large subunit (LSU) contains the ribosomal catalytic site termed the peptidyl transferase center (PTC), which catalyzes the formation of peptide bonds, thereby polymerizing the amino acids delivered by tRNAs into a polypeptide chain. The nascent polypeptides leave the ribosome through a tunnel in the LSU and interact with protein factors that function in enzymatic processing, targeting, and the membrane insertion of nascent chains at the exit of the ribosomal tunnel. The sequence is that of Large ribosomal subunit protein uL30 from Candida albicans (strain SC5314 / ATCC MYA-2876) (Yeast).